The primary structure comprises 389 residues: Phosphopentomutase (389 aa).

Residues D9, D282, H287, D323, H324, and H335 each contribute to the Mn(2+) site.

Belongs to the phosphopentomutase family. Requires Mn(2+) as cofactor.

The protein resides in the cytoplasm. It catalyses the reaction 2-deoxy-alpha-D-ribose 1-phosphate = 2-deoxy-D-ribose 5-phosphate. It carries out the reaction alpha-D-ribose 1-phosphate = D-ribose 5-phosphate. It participates in carbohydrate degradation; 2-deoxy-D-ribose 1-phosphate degradation; D-glyceraldehyde 3-phosphate and acetaldehyde from 2-deoxy-alpha-D-ribose 1-phosphate: step 1/2. Functionally, isomerase that catalyzes the conversion of deoxy-ribose 1-phosphate (dRib-1-P) and ribose 1-phosphate (Rib-1-P) to deoxy-ribose 5-phosphate (dRib-5-P) and ribose 5-phosphate (Rib-5-P), respectively. The protein is Phosphopentomutase of Kosmotoga olearia (strain ATCC BAA-1733 / DSM 21960 / TBF 19.5.1).